The sequence spans 367 residues: Nodulation protein NolF (367 aa).

Belongs to the membrane fusion protein (MFP) (TC 8.A.1) family.

Its function is as follows. Involved in the production of Medicago-specific nodulation signal molecule. This is Nodulation protein NolF (nolF) from Rhizobium meliloti (strain 1021) (Ensifer meliloti).